The primary structure comprises 331 residues: 6-phosphogluconolactonase (331 aa).

Position 287 is an N6-acetyllysine (Lys287).

This sequence belongs to the cycloisomerase 2 family.

The enzyme catalyses 6-phospho-D-glucono-1,5-lactone + H2O = 6-phospho-D-gluconate + H(+). Its pathway is carbohydrate degradation; pentose phosphate pathway; D-ribulose 5-phosphate from D-glucose 6-phosphate (oxidative stage): step 2/3. In terms of biological role, catalyzes the hydrolysis of 6-phosphogluconolactone to 6-phosphogluconate. In Escherichia coli O7:K1 (strain IAI39 / ExPEC), this protein is 6-phosphogluconolactonase.